The primary structure comprises 153 residues: 6,7-dimethyl-8-ribityllumazine synthase (153 aa).

5-amino-6-(D-ribitylamino)uracil is bound by residues Phe-21, 55-57, and 79-81; these read AFE and TVI. 84–85 provides a ligand contact to (2S)-2-hydroxy-3-oxobutyl phosphate; the sequence is AT. His-87 acts as the Proton donor in catalysis. Position 112 (Phe-112) interacts with 5-amino-6-(D-ribitylamino)uracil. Arg-126 provides a ligand contact to (2S)-2-hydroxy-3-oxobutyl phosphate.

The protein belongs to the DMRL synthase family. Forms an icosahedral capsid composed of 60 subunits, arranged as a dodecamer of pentamers.

It catalyses the reaction (2S)-2-hydroxy-3-oxobutyl phosphate + 5-amino-6-(D-ribitylamino)uracil = 6,7-dimethyl-8-(1-D-ribityl)lumazine + phosphate + 2 H2O + H(+). It functions in the pathway cofactor biosynthesis; riboflavin biosynthesis; riboflavin from 2-hydroxy-3-oxobutyl phosphate and 5-amino-6-(D-ribitylamino)uracil: step 1/2. Functionally, catalyzes the formation of 6,7-dimethyl-8-ribityllumazine by condensation of 5-amino-6-(D-ribitylamino)uracil with 3,4-dihydroxy-2-butanone 4-phosphate. This is the penultimate step in the biosynthesis of riboflavin. The polypeptide is 6,7-dimethyl-8-ribityllumazine synthase (Bacillus anthracis (strain A0248)).